Reading from the N-terminus, the 239-residue chain is MIVFILLSLAAVLQQFVADVNFESESPRRTEKQTEIVDMHNSFRRSVNPTARNMLKMEWYPEAADNAERWAYQCIYDHSANSERVIGGIQCGENIYKSSNPRAWTEIIQSWYDEIQNFEYGVGANPPGSVIGHYTQIVWYKSYRIGCAAAYCPSYPYNYFYVCQYCPTGNMEGLTATPYTSGPTCADCPSHCDDGLCTNPCPITNTFTNCDSLLQQNSCEDSYIKTNCGASCFCQDKII.

The N-terminal stretch at 1 to 18 (MIVFILLSLAAVLQQFVA) is a signal peptide. Positions 37-165 (VDMHNSFRRS…PYNYFYVCQY (129 aa)) constitute an SCP domain. 7 cysteine pairs are disulfide-bonded: cysteine 74/cysteine 152, cysteine 91/cysteine 166, cysteine 147/cysteine 163, cysteine 185/cysteine 192, cysteine 188/cysteine 197, cysteine 210/cysteine 228, and cysteine 219/cysteine 232. The ShKT domain occupies 201–234 (CPITNTFTNCDSLLQQNSCEDSYIKTNCGASCFC).

The protein belongs to the CRISP family. Expressed by the venom gland.

It localises to the secreted. Blocks contraction of smooth muscle elicited by high potassium-induced depolarization, but does not block caffeine-stimulated contraction. May target voltage-gated calcium channels on smooth muscle. The protein is Cysteine-rich venom protein ENH1 of Pseudoferania polylepis (Macleay's water snake).